The primary structure comprises 182 residues: Large ribosomal subunit protein uL6 (182 aa).

It belongs to the universal ribosomal protein uL6 family. Part of the 50S ribosomal subunit.

In terms of biological role, this protein binds to the 23S rRNA, and is important in its secondary structure. It is located near the subunit interface in the base of the L7/L12 stalk, and near the tRNA binding site of the peptidyltransferase center. This chain is Large ribosomal subunit protein uL6, found in Methanocaldococcus jannaschii (strain ATCC 43067 / DSM 2661 / JAL-1 / JCM 10045 / NBRC 100440) (Methanococcus jannaschii).